Consider the following 172-residue polypeptide: Myosin regulatory light chain RLC-A (172 aa).

Residues 1–16 are compositionally biased toward basic residues; the sequence is MSSKRAKTKTTKKRPQ. The tract at residues 1-20 is disordered; sequence MSSKRAKTKTTKKRPQRATS. Threonine 19 is modified (phosphothreonine; by MLCK). Position 20 is a phosphoserine; by MLCK (serine 20). EF-hand domains lie at 29–64, 98–133, and 134–169; these read SQIQ…MGKN, DPED…MGDR, and FTDE…GAKD. Residues aspartate 42, asparagine 44, aspartate 46, and aspartate 53 each coordinate Ca(2+).

Myosin is a hexamer of 2 heavy chains and 4 light chains. In terms of processing, phosphorylation increases the actin-activated myosin ATPase activity and thereby regulates the contractile activity.

Myosin regulatory subunit that plays an important role in regulation of both smooth muscle and nonmuscle cell contractile activity via its phosphorylation. Implicated in cytokinesis, receptor capping, and cell locomotion. In Rattus norvegicus (Rat), this protein is Myosin regulatory light chain RLC-A (Rlc-a).